A 251-amino-acid polypeptide reads, in one-letter code: MRQLEICCYGVECAVTAERAGADRIELCSAPAEGGLTPSAGALDSARRRVSIPVHPIVRPRGGDFCYSPSEFELMKSDISFIREQGFPGLVIGLLDVDGHVDQRRMRQVMQLSQGMDVTFHRAFDLCHNPLLTMAQIADLGVTRILTSGQQQSAESGLPLIRELIRQSNGPMIMAGAGVRLSNLQKFIDAGVMELHSSASQRVSSTMRYRKAGVSMCSETEVDEFSRTCVDADVVAAMKNVLMAASPGRVA.

Belongs to the CutC family.

It localises to the cytoplasm. The sequence is that of PF03932 family protein CutC from Erwinia tasmaniensis (strain DSM 17950 / CFBP 7177 / CIP 109463 / NCPPB 4357 / Et1/99).